A 363-amino-acid chain; its full sequence is Fructose-bisphosphate aldolase C (363 aa).

The residue at position 5 (tyrosine 5) is a Phosphotyrosine. Phosphoserine occurs at positions 36, 39, and 45. Arginine 56 is a binding site for substrate. The residue at position 111 (lysine 111) is an N6-acetyllysine. Substrate is bound at residue lysine 147. The Proton acceptor role is filled by glutamate 188. Catalysis depends on lysine 230, which acts as the Schiff-base intermediate with dihydroxyacetone-P.

This sequence belongs to the class I fructose-bisphosphate aldolase family. Homotetramer. Interacts with ATP6V1E1. In terms of tissue distribution, expressed exclusively in Purkinje cells in bands running from anterior to posterior across most of the cerebellum. Expressed at higher levels in the brains of BSE-infected animals.

It catalyses the reaction beta-D-fructose 1,6-bisphosphate = D-glyceraldehyde 3-phosphate + dihydroxyacetone phosphate. It participates in carbohydrate degradation; glycolysis; D-glyceraldehyde 3-phosphate and glycerone phosphate from D-glucose: step 4/4. In Mus musculus (Mouse), this protein is Fructose-bisphosphate aldolase C (Aldoc).